Here is a 155-residue protein sequence, read N- to C-terminus: Ribosomal RNA large subunit methyltransferase H (155 aa).

S-adenosyl-L-methionine is bound by residues L72, G103, and 122 to 127; that span reads LSDLTL.

Belongs to the RNA methyltransferase RlmH family. As to quaternary structure, homodimer.

The protein resides in the cytoplasm. The enzyme catalyses pseudouridine(1915) in 23S rRNA + S-adenosyl-L-methionine = N(3)-methylpseudouridine(1915) in 23S rRNA + S-adenosyl-L-homocysteine + H(+). Specifically methylates the pseudouridine at position 1915 (m3Psi1915) in 23S rRNA. This Albidiferax ferrireducens (strain ATCC BAA-621 / DSM 15236 / T118) (Rhodoferax ferrireducens) protein is Ribosomal RNA large subunit methyltransferase H.